We begin with the raw amino-acid sequence, 620 residues long: Arginine--tRNA ligase (620 aa).

Positions 147-157 (ANPTGPIHIGG) match the 'HIGH' region motif.

The protein belongs to the class-I aminoacyl-tRNA synthetase family. In terms of assembly, monomer.

The protein localises to the cytoplasm. The catalysed reaction is tRNA(Arg) + L-arginine + ATP = L-arginyl-tRNA(Arg) + AMP + diphosphate. This chain is Arginine--tRNA ligase, found in Bifidobacterium longum (strain DJO10A).